The chain runs to 334 residues: Holliday junction branch migration complex subunit RuvB (334 aa).

The interval 4-184 (ADRLISAAVI…FGIVQRLEFY (181 aa)) is large ATPase domain (RuvB-L). ATP contacts are provided by residues Ile23, Arg24, Gly65, Lys68, Thr69, Thr70, 131-133 (EDY), Arg174, Tyr184, and Arg221. Thr69 lines the Mg(2+) pocket. Residues 185–255 (QVADLEHIVS…VAMKALDMLN (71 aa)) form a small ATPAse domain (RuvB-S) region. Positions 258–334 (AEGFDFMDRK…YKHFGITREE (77 aa)) are head domain (RuvB-H). DNA is bound by residues Arg294, Arg313, and Arg318.

Belongs to the RuvB family. As to quaternary structure, homohexamer. Forms an RuvA(8)-RuvB(12)-Holliday junction (HJ) complex. HJ DNA is sandwiched between 2 RuvA tetramers; dsDNA enters through RuvA and exits via RuvB. An RuvB hexamer assembles on each DNA strand where it exits the tetramer. Each RuvB hexamer is contacted by two RuvA subunits (via domain III) on 2 adjacent RuvB subunits; this complex drives branch migration. In the full resolvosome a probable DNA-RuvA(4)-RuvB(12)-RuvC(2) complex forms which resolves the HJ.

Its subcellular location is the cytoplasm. The catalysed reaction is ATP + H2O = ADP + phosphate + H(+). The RuvA-RuvB-RuvC complex processes Holliday junction (HJ) DNA during genetic recombination and DNA repair, while the RuvA-RuvB complex plays an important role in the rescue of blocked DNA replication forks via replication fork reversal (RFR). RuvA specifically binds to HJ cruciform DNA, conferring on it an open structure. The RuvB hexamer acts as an ATP-dependent pump, pulling dsDNA into and through the RuvAB complex. RuvB forms 2 homohexamers on either side of HJ DNA bound by 1 or 2 RuvA tetramers; 4 subunits per hexamer contact DNA at a time. Coordinated motions by a converter formed by DNA-disengaged RuvB subunits stimulates ATP hydrolysis and nucleotide exchange. Immobilization of the converter enables RuvB to convert the ATP-contained energy into a lever motion, pulling 2 nucleotides of DNA out of the RuvA tetramer per ATP hydrolyzed, thus driving DNA branch migration. The RuvB motors rotate together with the DNA substrate, which together with the progressing nucleotide cycle form the mechanistic basis for DNA recombination by continuous HJ branch migration. Branch migration allows RuvC to scan DNA until it finds its consensus sequence, where it cleaves and resolves cruciform DNA. In Yersinia pseudotuberculosis serotype O:1b (strain IP 31758), this protein is Holliday junction branch migration complex subunit RuvB.